A 235-amino-acid chain; its full sequence is MMQSREEIRDDSSSGLVLTTDPKPRLRWTTELHERFVDAVTHLGGPEKATPKTIMRVMGVKGLTLYHLKSHLQKFRLGKQPHKEHSQNHSICIRDTNRASMLDLRRNAVFTTSPLIIGRNMNEMQMEVQRRIEEEVVIERQVNQRIAAQGKYMESMLEKACETQEASLTKDYSTLFFDRTNICNNTSSIPIPWFEDHFPSSSSMDSTLILPDINSNFSLQDSRSSITKGRTVCLG.

A compositionally biased stretch (basic and acidic residues) spans 1 to 12 (MMQSREEIRDDS). The disordered stretch occupies residues 1–20 (MMQSREEIRDDSSSGLVLTT). The HTH myb-type domain occupies 20 to 80 (TDPKPRLRWT…HLQKFRLGKQ (61 aa)). The segment at residues 51-76 (PKTIMRVMGVKGLTLYHLKSHLQKFR) is a DNA-binding region (H-T-H motif). A coiled coil region spans residues 119–139 (RNMNEMQMEVQRRIEEEVVIE).

This sequence belongs to the MYB-CC family. In terms of tissue distribution, expressed in phloem and/or cambium.

It is found in the nucleus. The sequence is that of Myb family transcription factor PHL12 from Arabidopsis thaliana (Mouse-ear cress).